The following is a 184-amino-acid chain: Large ribosomal subunit protein uL5 (184 aa).

Belongs to the universal ribosomal protein uL5 family. As to quaternary structure, part of the 50S ribosomal subunit; part of the 5S rRNA/L5/L18/L25 subcomplex. Contacts the 5S rRNA and the P site tRNA. Forms a bridge to the 30S subunit in the 70S ribosome.

This is one of the proteins that bind and probably mediate the attachment of the 5S RNA into the large ribosomal subunit, where it forms part of the central protuberance. In the 70S ribosome it contacts protein S13 of the 30S subunit (bridge B1b), connecting the 2 subunits; this bridge is implicated in subunit movement. Contacts the P site tRNA; the 5S rRNA and some of its associated proteins might help stabilize positioning of ribosome-bound tRNAs. The chain is Large ribosomal subunit protein uL5 from Ureaplasma parvum serovar 3 (strain ATCC 27815 / 27 / NCTC 11736).